The chain runs to 193 residues: Ribosomal RNA small subunit methyltransferase G (193 aa).

Residues Gly-62, Phe-67, Ile-111–Glu-112, and Arg-125 each bind S-adenosyl-L-methionine.

It belongs to the methyltransferase superfamily. RNA methyltransferase RsmG family.

The protein resides in the cytoplasm. It catalyses the reaction guanosine(527) in 16S rRNA + S-adenosyl-L-methionine = N(7)-methylguanosine(527) in 16S rRNA + S-adenosyl-L-homocysteine. Its function is as follows. Specifically methylates the N7 position of guanine in position 527 of 16S rRNA. The chain is Ribosomal RNA small subunit methyltransferase G from Gluconobacter oxydans (strain 621H) (Gluconobacter suboxydans).